Reading from the N-terminus, the 37-residue chain is Large ribosomal subunit protein bL36 (37 aa).

Belongs to the bacterial ribosomal protein bL36 family.

This Acidothermus cellulolyticus (strain ATCC 43068 / DSM 8971 / 11B) protein is Large ribosomal subunit protein bL36.